We begin with the raw amino-acid sequence, 548 residues long: 5-epi-aristolochene synthase 2 (548 aa).

5 residues coordinate Mg(2+): Asp-301, Asp-305, Asp-444, Thr-448, and Glu-452. Residues 301–305 (DDTFD) carry the DDXXD motif motif.

This sequence belongs to the terpene synthase family. Monomer. Mg(2+) is required as a cofactor. As to expression, expressed in roots, but not in shoots.

It localises to the cytoplasm. The catalysed reaction is (2E,6E)-farnesyl diphosphate = (+)-5-epi-aristolochene + diphosphate. It functions in the pathway secondary metabolite biosynthesis; terpenoid biosynthesis. Functionally, catalyzes the cyclization of trans,trans-farnesyl diphosphate (FPP) to the bicyclic intermediate 5-epi-aristolochene, initial step in the conversion of FPP to the sesquiterpenoid antifungal phytoalexin capsidiol. Produces germacrene A as an enzyme-bound intermediate that is not released by the enzyme, but is further cyclized to produce the bicyclic 5-epi-aristolochene. This Nicotiana attenuata (Coyote tobacco) protein is 5-epi-aristolochene synthase 2.